The sequence spans 723 residues: Fatty acid oxidation complex subunit alpha (723 aa).

The enoyl-CoA hydratase/isomerase stretch occupies residues 1–189 (MIYQANTLQV…KVGLLDAIVE (189 aa)). Asp-296 contributes to the substrate binding site. Positions 311–723 (NKATERAAVL…FYDGQQASSL (413 aa)) are 3-hydroxyacyl-CoA dehydrogenase. NAD(+)-binding positions include Met-325, Asp-344, 401-403 (VVE), Lys-408, and Ser-430. The For 3-hydroxyacyl-CoA dehydrogenase activity role is filled by His-451. Asn-454 lines the NAD(+) pocket. Substrate contacts are provided by Asn-501 and Tyr-661.

The protein in the N-terminal section; belongs to the enoyl-CoA hydratase/isomerase family. It in the C-terminal section; belongs to the 3-hydroxyacyl-CoA dehydrogenase family. As to quaternary structure, heterotetramer of two alpha chains (FadB) and two beta chains (FadA).

It catalyses the reaction a (3S)-3-hydroxyacyl-CoA + NAD(+) = a 3-oxoacyl-CoA + NADH + H(+). The enzyme catalyses a (3S)-3-hydroxyacyl-CoA = a (2E)-enoyl-CoA + H2O. The catalysed reaction is a 4-saturated-(3S)-3-hydroxyacyl-CoA = a (3E)-enoyl-CoA + H2O. It carries out the reaction (3S)-3-hydroxybutanoyl-CoA = (3R)-3-hydroxybutanoyl-CoA. It catalyses the reaction a (3Z)-enoyl-CoA = a 4-saturated (2E)-enoyl-CoA. The enzyme catalyses a (3E)-enoyl-CoA = a 4-saturated (2E)-enoyl-CoA. It participates in lipid metabolism; fatty acid beta-oxidation. Involved in the aerobic and anaerobic degradation of long-chain fatty acids via beta-oxidation cycle. Catalyzes the formation of 3-oxoacyl-CoA from enoyl-CoA via L-3-hydroxyacyl-CoA. It can also use D-3-hydroxyacyl-CoA and cis-3-enoyl-CoA as substrate. In Vibrio atlanticus (strain LGP32) (Vibrio splendidus (strain Mel32)), this protein is Fatty acid oxidation complex subunit alpha.